The primary structure comprises 179 residues: SCAN domain-containing protein 1 (179 aa).

The interval 1–104 (MAATEPILAA…PGPAGSRLGP (104 aa)) is disordered. Over residues 52 to 80 (SPNAAVPEAIPTPRAAASAALELPLGPAP) the composition is skewed to low complexity. Positions 108-166 (RQRFRQFRYQDAAGPREAFRQLRELSRQWLRPDIRTKEQIVEMLVQEQLLAILPEAARA) constitute an SCAN box domain.

In terms of assembly, interacts with ZNF202.

The protein localises to the nucleus. May regulate transcriptional activity. The polypeptide is SCAN domain-containing protein 1 (SCAND1) (Homo sapiens (Human)).